A 319-amino-acid polypeptide reads, in one-letter code: Phosphatidylglycerol--prolipoprotein diacylglyceryl transferase (319 aa).

3 helical membrane-spanning segments follow: residues P21–L41, G50–G70, and N98–F118. R144 is a binding site for a 1,2-diacyl-sn-glycero-3-phospho-(1'-sn-glycerol). 2 consecutive transmembrane segments (helical) span residues V191–W211 and I254–K274. The tract at residues A295 to R319 is disordered.

The protein belongs to the Lgt family.

The protein localises to the cell membrane. The enzyme catalyses L-cysteinyl-[prolipoprotein] + a 1,2-diacyl-sn-glycero-3-phospho-(1'-sn-glycerol) = an S-1,2-diacyl-sn-glyceryl-L-cysteinyl-[prolipoprotein] + sn-glycerol 1-phosphate + H(+). The protein operates within protein modification; lipoprotein biosynthesis (diacylglyceryl transfer). Its function is as follows. Catalyzes the transfer of the diacylglyceryl group from phosphatidylglycerol to the sulfhydryl group of the N-terminal cysteine of a prolipoprotein, the first step in the formation of mature lipoproteins. This is Phosphatidylglycerol--prolipoprotein diacylglyceryl transferase from Corynebacterium glutamicum (strain R).